Consider the following 581-residue polypeptide: ATP-dependent lipid A-core flippase (581 aa).

Helical transmembrane passes span 27 to 47, 63 to 83, 154 to 174, 251 to 271, and 279 to 299; these read VFLAVIGMVGTAATEPVFPAI, MVWLIPMGIVTLFLVRSVIVY, IALIGYLLYLDWKLTLITLAI, MTPITHIAASVAVAIIAFLAL, and GASAGSFISFITAMLMLISPV. Positions 28–311 constitute an ABC transmembrane type-1 domain; it reads FLAVIGMVGT…LATVNPTIQR (284 aa). Residues 343-579 form the ABC transporter domain; sequence ICFDNVSLRY…GSYYANLSRL (237 aa). 377–384 contacts ATP; that stretch reads GASGGGKS.

It belongs to the ABC transporter superfamily. Lipid exporter (TC 3.A.1.106) family. In terms of assembly, homodimer.

The protein localises to the cell inner membrane. The enzyme catalyses ATP + H2O + lipid A-core oligosaccharideSide 1 = ADP + phosphate + lipid A-core oligosaccharideSide 2.. Involved in lipopolysaccharide (LPS) biosynthesis. Translocates lipid A-core from the inner to the outer leaflet of the inner membrane. Transmembrane domains (TMD) form a pore in the inner membrane and the ATP-binding domain (NBD) is responsible for energy generation. The protein is ATP-dependent lipid A-core flippase of Albidiferax ferrireducens (strain ATCC BAA-621 / DSM 15236 / T118) (Rhodoferax ferrireducens).